A 318-amino-acid polypeptide reads, in one-letter code: Porphobilinogen deaminase (318 aa).

S-(dipyrrolylmethanemethyl)cysteine is present on Cys-241.

This sequence belongs to the HMBS family. In terms of assembly, monomer. Requires dipyrromethane as cofactor.

The enzyme catalyses 4 porphobilinogen + H2O = hydroxymethylbilane + 4 NH4(+). It participates in porphyrin-containing compound metabolism; protoporphyrin-IX biosynthesis; coproporphyrinogen-III from 5-aminolevulinate: step 2/4. Its function is as follows. Tetrapolymerization of the monopyrrole PBG into the hydroxymethylbilane pre-uroporphyrinogen in several discrete steps. In Geotalea daltonii (strain DSM 22248 / JCM 15807 / FRC-32) (Geobacter daltonii), this protein is Porphobilinogen deaminase.